We begin with the raw amino-acid sequence, 234 residues long: Zinc finger FYVE domain-containing protein 21 (234 aa).

The FYVE-type zinc-finger motif lies at 44 to 104 (DKECRRCMQC…QCAECALVSL (61 aa)). Zn(2+) contacts are provided by Cys50, Cys53, Cys66, Cys69, Cys74, Cys77, Cys96, and Cys99. Positions 107–234 (AEFYDKQLKV…AKLLYESRDQ (128 aa)) are PH-like.

Interacts with PTK2/FAK1.

Its subcellular location is the cell junction. It is found in the focal adhesion. The protein resides in the cytoplasmic vesicle. The protein localises to the endosome. In terms of biological role, plays a role in cell adhesion, and thereby in cell motility which requires repeated formation and disassembly of focal adhesions. Regulates microtubule-induced PTK2/FAK1 dephosphorylation, an event important for focal adhesion disassembly, as well as integrin beta-1/ITGB1 cell surface expression. The polypeptide is Zinc finger FYVE domain-containing protein 21 (ZFYVE21) (Homo sapiens (Human)).